Consider the following 493-residue polypeptide: Glycerol kinase (493 aa).

Thr11 contributes to the ADP binding site. Thr11, Thr12, and Ser13 together coordinate ATP. Thr11 contacts sn-glycerol 3-phosphate. An ADP-binding site is contributed by Arg15. Positions 80, 81, 132, and 241 each coordinate sn-glycerol 3-phosphate. Residues Arg80, Glu81, Tyr132, Asp241, and Gln242 each contribute to the glycerol site. Residues Thr263 and Gly306 each contribute to the ADP site. Positions 263, 306, 310, and 408 each coordinate ATP. Gly408 serves as a coordination point for ADP.

The protein belongs to the FGGY kinase family.

The catalysed reaction is glycerol + ATP = sn-glycerol 3-phosphate + ADP + H(+). The protein operates within polyol metabolism; glycerol degradation via glycerol kinase pathway; sn-glycerol 3-phosphate from glycerol: step 1/1. With respect to regulation, inhibited by fructose 1,6-bisphosphate (FBP). Functionally, key enzyme in the regulation of glycerol uptake and metabolism. Catalyzes the phosphorylation of glycerol to yield sn-glycerol 3-phosphate. The chain is Glycerol kinase from Cereibacter sphaeroides (strain ATCC 17029 / ATH 2.4.9) (Rhodobacter sphaeroides).